Here is a 247-residue protein sequence, read N- to C-terminus: MADS-box transcription factor 1 (247 aa).

The region spanning 1-61 (MGRGRVELKR…GKLYEFCSTS (61 aa)) is the MADS-box domain. Residues 91–181 (ELSSQQEYLK…RQRMEGYQIN (91 aa)) enclose the K-box domain.

As to expression, expressed abundantly in the seed coat and to lesser extent in young buds, carpels, petals, and stamen.

The protein resides in the nucleus. Its function is as follows. Probable transcription factor. The polypeptide is MADS-box transcription factor 1 (Pisum sativum (Garden pea)).